Consider the following 623-residue polypeptide: DNA-directed RNA polymerase subunit gamma (623 aa).

Cysteine 70, cysteine 72, cysteine 85, and cysteine 88 together coordinate Zn(2+). Mg(2+) contacts are provided by aspartate 466, aspartate 468, and aspartate 470.

It belongs to the RNA polymerase beta' chain family. RpoC1 subfamily. In terms of assembly, in cyanobacteria the RNAP catalytic core is composed of 2 alpha, 1 beta, 1 beta', 1 gamma and 1 omega subunit. When a sigma factor is associated with the core the holoenzyme is formed, which can initiate transcription. It depends on Mg(2+) as a cofactor. Zn(2+) serves as cofactor.

The catalysed reaction is RNA(n) + a ribonucleoside 5'-triphosphate = RNA(n+1) + diphosphate. Functionally, DNA-dependent RNA polymerase catalyzes the transcription of DNA into RNA using the four ribonucleoside triphosphates as substrates. In Acaryochloris marina (strain MBIC 11017), this protein is DNA-directed RNA polymerase subunit gamma.